Consider the following 120-residue polypeptide: MKINSKQTRIHKHRRVRKKVQGTASRPRLCVFRSNKHIYAQVIDDIKGITLVAASSINLKLQSSITLGSNCEASRSVGKTLAERSIKEGIENVVFDRGGKLYHGRVEALAEAAKEAGMVF.

It belongs to the universal ribosomal protein uL18 family. Part of the 50S ribosomal subunit; contacts the 5S rRNA.

The protein localises to the plastid. It is found in the chloroplast. Its function is as follows. Binds 5S rRNA, forms part of the central protuberance of the 50S subunit. This Porphyra purpurea (Red seaweed) protein is Large ribosomal subunit protein uL18c (rpl18).